The primary structure comprises 329 residues: GTP 3',8-cyclase (329 aa).

In terms of domain architecture, Radical SAM core spans 8-234 (AFARKFYYLR…QIRQRSDGPA (227 aa)). Residue Arg-17 coordinates GTP. Residues Cys-24 and Cys-28 each contribute to the [4Fe-4S] cluster site. Residue Tyr-30 participates in S-adenosyl-L-methionine binding. [4Fe-4S] cluster is bound at residue Cys-31. Residue Arg-68 coordinates GTP. Gly-72 is a binding site for S-adenosyl-L-methionine. Thr-99 contributes to the GTP binding site. Position 123 (Ser-123) interacts with S-adenosyl-L-methionine. Lys-160 serves as a coordination point for GTP. Met-194 is an S-adenosyl-L-methionine binding site. Cys-257 and Cys-260 together coordinate [4Fe-4S] cluster. 262–264 (RLR) lines the GTP pocket. Residue Cys-274 coordinates [4Fe-4S] cluster.

It belongs to the radical SAM superfamily. MoaA family. Monomer and homodimer. [4Fe-4S] cluster is required as a cofactor.

It catalyses the reaction GTP + AH2 + S-adenosyl-L-methionine = (8S)-3',8-cyclo-7,8-dihydroguanosine 5'-triphosphate + 5'-deoxyadenosine + L-methionine + A + H(+). It participates in cofactor biosynthesis; molybdopterin biosynthesis. Its function is as follows. Catalyzes the cyclization of GTP to (8S)-3',8-cyclo-7,8-dihydroguanosine 5'-triphosphate. The protein is GTP 3',8-cyclase of Klebsiella pneumoniae subsp. pneumoniae (strain ATCC 700721 / MGH 78578).